The sequence spans 116 residues: Ribonuclease P protein component (116 aa).

The protein belongs to the RnpA family. Consists of a catalytic RNA component (M1 or rnpB) and a protein subunit.

It catalyses the reaction Endonucleolytic cleavage of RNA, removing 5'-extranucleotides from tRNA precursor.. In terms of biological role, RNaseP catalyzes the removal of the 5'-leader sequence from pre-tRNA to produce the mature 5'-terminus. It can also cleave other RNA substrates such as 4.5S RNA. The protein component plays an auxiliary but essential role in vivo by binding to the 5'-leader sequence and broadening the substrate specificity of the ribozyme. This is Ribonuclease P protein component from Leuconostoc mesenteroides subsp. mesenteroides (strain ATCC 8293 / DSM 20343 / BCRC 11652 / CCM 1803 / JCM 6124 / NCDO 523 / NBRC 100496 / NCIMB 8023 / NCTC 12954 / NRRL B-1118 / 37Y).